The following is a 262-amino-acid chain: Acyl-[acyl-carrier-protein]--UDP-N-acetylglucosamine O-acyltransferase (262 aa).

It belongs to the transferase hexapeptide repeat family. LpxA subfamily. Homotrimer.

It localises to the cytoplasm. The enzyme catalyses a (3R)-hydroxyacyl-[ACP] + UDP-N-acetyl-alpha-D-glucosamine = a UDP-3-O-[(3R)-3-hydroxyacyl]-N-acetyl-alpha-D-glucosamine + holo-[ACP]. Its pathway is glycolipid biosynthesis; lipid IV(A) biosynthesis; lipid IV(A) from (3R)-3-hydroxytetradecanoyl-[acyl-carrier-protein] and UDP-N-acetyl-alpha-D-glucosamine: step 1/6. Its function is as follows. Involved in the biosynthesis of lipid A, a phosphorylated glycolipid that anchors the lipopolysaccharide to the outer membrane of the cell. The protein is Acyl-[acyl-carrier-protein]--UDP-N-acetylglucosamine O-acyltransferase of Vibrio parahaemolyticus serotype O3:K6 (strain RIMD 2210633).